The sequence spans 351 residues: Transmembrane and coiled-coil domain-containing protein 5B (351 aa).

Residues 17-214 adopt a coiled-coil conformation; it reads EIPKLEITKQ…WRSSIQSAKT (198 aa). Residues 292–312 traverse the membrane as a helical segment; that stretch reads IFVVMIFFRLLGYVLFYLQYI.

Belongs to the TMCO5 family.

It is found in the membrane. This is Transmembrane and coiled-coil domain-containing protein 5B (TMCO5B) from Bos taurus (Bovine).